A 436-amino-acid polypeptide reads, in one-letter code: Phosphoribosylamine--glycine ligase (436 aa).

In terms of domain architecture, ATP-grasp spans 106–318 (RKLFEDYRIP…MLEICEGIVD (213 aa)). 133-196 (MEDFDSEAVV…EERVVGEEFT (64 aa)) lines the ATP pocket. Positions 276, 288, and 290 each coordinate Mg(2+). Mn(2+) is bound by residues Gln276, Glu288, and Asn290.

Belongs to the GARS family. Requires Mg(2+) as cofactor. The cofactor is Mn(2+).

The catalysed reaction is 5-phospho-beta-D-ribosylamine + glycine + ATP = N(1)-(5-phospho-beta-D-ribosyl)glycinamide + ADP + phosphate + H(+). It functions in the pathway purine metabolism; IMP biosynthesis via de novo pathway; N(1)-(5-phospho-D-ribosyl)glycinamide from 5-phospho-alpha-D-ribose 1-diphosphate: step 2/2. The sequence is that of Phosphoribosylamine--glycine ligase from Methanothermobacter thermautotrophicus (strain ATCC 29096 / DSM 1053 / JCM 10044 / NBRC 100330 / Delta H) (Methanobacterium thermoautotrophicum).